Here is a 316-residue protein sequence, read N- to C-terminus: Exonuclease DPD1, chloroplastic/mitochondrial (316 aa).

Residues 1 to 63 (MCISISQVSR…NVSTTTQGSR (63 aa)) constitute a chloroplast and mitochondrion transit peptide. The Exonuclease domain maps to 112-282 (IVSDLETTGL…SDVLLLSKVF (171 aa)). Residues Asp-115 and Glu-117 each coordinate Mg(2+). His-269 (proton donor/acceptor) is an active-site residue. Asp-274 lines the Mg(2+) pocket.

It belongs to the exonuclease superfamily. TREX family. The cofactor is Mg(2+). In terms of tissue distribution, highly expressed in mature pollen grains. Detected in flowers, senescing leaves and roots.

It localises to the plastid. The protein localises to the chloroplast. The protein resides in the mitochondrion. Inhibited by free nucleotide diphosphates (NDPs). Exonuclease required for organelle DNA degradation during pollen development. Plays non-essential roles in maternal inheritance. May be part of the DNA salvage machinery. The polypeptide is Exonuclease DPD1, chloroplastic/mitochondrial (Arabidopsis thaliana (Mouse-ear cress)).